Consider the following 173-residue polypeptide: CKLF-like MARVEL transmembrane domain-containing protein 8 (173 aa).

In terms of domain architecture, MARVEL spans 36–168 (FLRTLPGFLI…NTYFSFIAWR (133 aa)). The next 4 membrane-spanning stretches (helical) occupy residues 40-60 (LPGF…TLIA), 70-90 (FGWV…FLII), 105-125 (TTVG…AAVV), and 147-167 (FFAF…FIAW).

The protein belongs to the chemokine-like factor family. As to expression, highly expressed in liver and pancreas.

It localises to the membrane. It is found in the cytoplasm. The protein resides in the nucleus. This Homo sapiens (Human) protein is CKLF-like MARVEL transmembrane domain-containing protein 8 (CMTM8).